A 146-amino-acid polypeptide reads, in one-letter code: Hut operon positive regulatory protein (146 aa).

This sequence belongs to the HutP family. Homohexamer.

Its function is as follows. Antiterminator that binds to cis-acting regulatory sequences on the mRNA in the presence of histidine, thereby suppressing transcription termination and activating the hut operon for histidine utilization. The sequence is that of Hut operon positive regulatory protein from Bacillus mycoides (strain KBAB4) (Bacillus weihenstephanensis).